The primary structure comprises 119 residues: Nascent polypeptide-associated complex protein (119 aa).

The region spanning 5-73 (RMNSREMRRL…FRETPKKQEG (69 aa)) is the NAC-A/B domain.

Belongs to the NAC-alpha family. In terms of assembly, homodimer. Interacts with the ribosome. Binds ribosomal RNA.

Functionally, contacts the emerging nascent chain on the ribosome. In Thermoplasma volcanium (strain ATCC 51530 / DSM 4299 / JCM 9571 / NBRC 15438 / GSS1), this protein is Nascent polypeptide-associated complex protein.